A 529-amino-acid polypeptide reads, in one-letter code: Bifunctional purine biosynthesis protein PurH (529 aa).

The 148-residue stretch at 1 to 148 (MQQRRPVRRA…KNHKDVAIVV (148 aa)) folds into the MGS-like domain. Lys-287 is modified (N6-acetyllysine).

The protein belongs to the PurH family.

The enzyme catalyses (6R)-10-formyltetrahydrofolate + 5-amino-1-(5-phospho-beta-D-ribosyl)imidazole-4-carboxamide = 5-formamido-1-(5-phospho-D-ribosyl)imidazole-4-carboxamide + (6S)-5,6,7,8-tetrahydrofolate. It catalyses the reaction IMP + H2O = 5-formamido-1-(5-phospho-D-ribosyl)imidazole-4-carboxamide. It participates in purine metabolism; IMP biosynthesis via de novo pathway; 5-formamido-1-(5-phospho-D-ribosyl)imidazole-4-carboxamide from 5-amino-1-(5-phospho-D-ribosyl)imidazole-4-carboxamide (10-formyl THF route): step 1/1. Its pathway is purine metabolism; IMP biosynthesis via de novo pathway; IMP from 5-formamido-1-(5-phospho-D-ribosyl)imidazole-4-carboxamide: step 1/1. The sequence is that of Bifunctional purine biosynthesis protein PurH from Escherichia coli O6:H1 (strain CFT073 / ATCC 700928 / UPEC).